The sequence spans 205 residues: Glycerol-3-phosphate acyltransferase 1 (205 aa).

5 helical membrane passes run 7–27 (TLIGYVFGNFLTAMIVGKLFL), 52–74 (WGILTCLGDLLKSLIALFIVYFV), 78–100 (HINIAYAGLGLILGHCFPIWNHF), 125–145 (LLIALILTAIMQNLTIPPLVF), and 160–180 (AGIVFMVITLIMVYKFWQDII).

It belongs to the PlsY family. Probably interacts with PlsX.

The protein localises to the cell membrane. It catalyses the reaction an acyl phosphate + sn-glycerol 3-phosphate = a 1-acyl-sn-glycero-3-phosphate + phosphate. It participates in lipid metabolism; phospholipid metabolism. Catalyzes the transfer of an acyl group from acyl-phosphate (acyl-PO(4)) to glycerol-3-phosphate (G3P) to form lysophosphatidic acid (LPA). This enzyme utilizes acyl-phosphate as fatty acyl donor, but not acyl-CoA or acyl-ACP. This is Glycerol-3-phosphate acyltransferase 1 from Lactobacillus acidophilus (strain ATCC 700396 / NCK56 / N2 / NCFM).